A 214-amino-acid polypeptide reads, in one-letter code: Exosome complex component RRP46 homolog (214 aa).

The protein belongs to the RNase PH family. Homodimer. Component of the RNA exosome complex. Interacts with crn-4; interaction promotes the DNase activity of crn-4. Interacts with crn-3, cps-6 and cyn-13.

It is found in the cytoplasm. It localises to the nucleus. In terms of biological role, non-catalytic component of the RNA exosome complex which has 3'-&gt;5' exoribonuclease activity and participates in a multitude of cellular RNA processing and degradation events. Involved in apoptotic DNA degradation. In vitro, does not bind or digest single-stranded RNA. In vitro, binds to double-stranded DNA without detectable DNase activity. In Caenorhabditis elegans, this protein is Exosome complex component RRP46 homolog.